The chain runs to 250 residues: Ubiquinone/menaquinone biosynthesis C-methyltransferase UbiE (250 aa).

S-adenosyl-L-methionine is bound by residues T73, D94, and 122-123; that span reads DA.

This sequence belongs to the class I-like SAM-binding methyltransferase superfamily. MenG/UbiE family.

It catalyses the reaction a 2-demethylmenaquinol + S-adenosyl-L-methionine = a menaquinol + S-adenosyl-L-homocysteine + H(+). The enzyme catalyses a 2-methoxy-6-(all-trans-polyprenyl)benzene-1,4-diol + S-adenosyl-L-methionine = a 5-methoxy-2-methyl-3-(all-trans-polyprenyl)benzene-1,4-diol + S-adenosyl-L-homocysteine + H(+). It functions in the pathway quinol/quinone metabolism; menaquinone biosynthesis; menaquinol from 1,4-dihydroxy-2-naphthoate: step 2/2. It participates in cofactor biosynthesis; ubiquinone biosynthesis. Methyltransferase required for the conversion of demethylmenaquinol (DMKH2) to menaquinol (MKH2) and the conversion of 2-polyprenyl-6-methoxy-1,4-benzoquinol (DDMQH2) to 2-polyprenyl-3-methyl-6-methoxy-1,4-benzoquinol (DMQH2). This chain is Ubiquinone/menaquinone biosynthesis C-methyltransferase UbiE, found in Coxiella burnetii (strain CbuK_Q154) (Coxiella burnetii (strain Q154)).